We begin with the raw amino-acid sequence, 184 residues long: CKLF-like MARVEL transmembrane domain-containing protein 3 (184 aa).

Positions 1-12 (MWPPDAEPEPDP) are enriched in acidic residues. A disordered region spans residues 1–22 (MWPPDAEPEPDPESAHGPRSGR). Residues 36-155 (FLCSLKGRLL…DFYLIFNEVA (120 aa)) enclose the MARVEL domain. 3 helical membrane-spanning segments follow: residues 64 to 84 (ASAFLTVPLLEFLLAVYFLFA), 96 to 116 (LCWPMMDFLRCVTAALIYFVI), and 131 to 151 (AAGVFGFFATIVFAIDFYLIF). Residues 163–184 (SGNETTAHRTEEENSNSDSDSD) are disordered. Residues 175–184 (ENSNSDSDSD) are compositionally biased toward acidic residues.

It belongs to the chemokine-like factor family.

The protein resides in the membrane. This chain is CKLF-like MARVEL transmembrane domain-containing protein 3 (Cmtm3), found in Mus musculus (Mouse).